Here is a 960-residue protein sequence, read N- to C-terminus: Chromo domain-containing protein 1 (960 aa).

The Chromo domain occupies 22 to 74; the sequence is YEVEDILADRVNKNGINEYYIKWAGYDWYDNTWEPEQNLFGAEKVLKKWKKRK.

As to quaternary structure, ago1, chp1 and tas3 interact to form the core of the RNA-induced transcriptional silencing (RITS) complex. The RITS complex interacts with the RDRC complex via interaction between ago1 and hrr1. Clr4 has a role in mediating this interaction. Interacts with dri1.

The protein resides in the nucleus. It localises to the cytoplasm. Its subcellular location is the cytoskeleton. The protein localises to the microtubule organizing center. It is found in the spindle pole body. Its function is as follows. Component of the kinetochore which plays a role in stabilizing microtubules and so allowing accurate chromosome segregation. Has a role in the RNA interference (RNAi) pathway which is important for heterochromatin formation and accurate chromosome segregation. A member of the RNA-induced transcriptional silencing (RITS) complex which is involved in the biosynthesis of dsRNA from primer siRNAs provided by the RNA-directed RNA polymerase (RDRC) complex. This chain is Chromo domain-containing protein 1, found in Schizosaccharomyces pombe (strain 972 / ATCC 24843) (Fission yeast).